The primary structure comprises 448 residues: MHIVVVGLNNKTAPVAIREQFSFGEQEIVDAMIALREEKSIFESVILSTCNRTELYVVTDQLHTGRYYTKRFLANWFNLEMEQFTPYLSIREGEEAIRHLFRVTSGLDSMIIGETQILGQVKTSFFRAQEHGTTGTVFNKLFKEAVTLAKRAHTDTQIGEMSVSVSSAAVTLAQEMYQQLEDKQVVVVGAGETGELTTLNLFEAGAKQIAVFNRTESKAKAVADKFKGRAHSIREIACGLLDADILISSTGAKEAVIGYDDVAAAQLLRRERPLLLIDIAVPRDIDPAVATLPGVHLFDVDDLNGIVNKNLEARLVEAEKIEMKIDEAIQEFQTWLVTLGVVPIMNELRARALDIQEDTMTSLERKLDHLSARDKKVIGKHMKSIINQMLRDPIDYIKDAAAQPDANVRIAQFIETFGLDVELPEQPVDEVEETDATSAKAPLRALMR.

Residues 49 to 52 (TCNR), S109, 114 to 116 (ETQ), and Q120 each bind substrate. C50 (nucleophile) is an active-site residue. 189–194 (GAGETG) provides a ligand contact to NADP(+). The disordered stretch occupies residues 427–448 (PVDEVEETDATSAKAPLRALMR).

It belongs to the glutamyl-tRNA reductase family. As to quaternary structure, homodimer.

It carries out the reaction (S)-4-amino-5-oxopentanoate + tRNA(Glu) + NADP(+) = L-glutamyl-tRNA(Glu) + NADPH + H(+). It functions in the pathway porphyrin-containing compound metabolism; protoporphyrin-IX biosynthesis; 5-aminolevulinate from L-glutamyl-tRNA(Glu): step 1/2. Functionally, catalyzes the NADPH-dependent reduction of glutamyl-tRNA(Glu) to glutamate 1-semialdehyde (GSA). The protein is Glutamyl-tRNA reductase of Exiguobacterium sp. (strain ATCC BAA-1283 / AT1b).